The following is a 496-amino-acid chain: Protein nucleotidyltransferase YdiU (496 aa).

8 residues coordinate ATP: Gly-98, Gly-100, Arg-101, Lys-116, Asp-128, Gly-129, Arg-179, and Arg-186. The active-site Proton acceptor is the Asp-259. Mg(2+) is bound by residues Asn-260 and Asp-269. Residue Asp-269 coordinates ATP.

It belongs to the SELO family. The cofactor is Mg(2+). Mn(2+) serves as cofactor.

The enzyme catalyses L-seryl-[protein] + ATP = 3-O-(5'-adenylyl)-L-seryl-[protein] + diphosphate. The catalysed reaction is L-threonyl-[protein] + ATP = 3-O-(5'-adenylyl)-L-threonyl-[protein] + diphosphate. It catalyses the reaction L-tyrosyl-[protein] + ATP = O-(5'-adenylyl)-L-tyrosyl-[protein] + diphosphate. It carries out the reaction L-histidyl-[protein] + UTP = N(tele)-(5'-uridylyl)-L-histidyl-[protein] + diphosphate. The enzyme catalyses L-seryl-[protein] + UTP = O-(5'-uridylyl)-L-seryl-[protein] + diphosphate. The catalysed reaction is L-tyrosyl-[protein] + UTP = O-(5'-uridylyl)-L-tyrosyl-[protein] + diphosphate. Its function is as follows. Nucleotidyltransferase involved in the post-translational modification of proteins. It can catalyze the addition of adenosine monophosphate (AMP) or uridine monophosphate (UMP) to a protein, resulting in modifications known as AMPylation and UMPylation. The polypeptide is Protein nucleotidyltransferase YdiU (Albidiferax ferrireducens (strain ATCC BAA-621 / DSM 15236 / T118) (Rhodoferax ferrireducens)).